Reading from the N-terminus, the 513-residue chain is uncharacterized protein (513 aa).

The 59-residue stretch at 3-61 folds into the TRAM domain; sequence NLKIGQKLQLEIERMGINGEGIGVISGRLVFIPYALPGEEVLVEITENARNFSRAKLVK. Residues glutamine 309, tyrosine 338, aspartate 359, and aspartate 407 each contribute to the S-adenosyl-L-methionine site. Cysteine 434 acts as the Nucleophile in catalysis.

Belongs to the class I-like SAM-binding methyltransferase superfamily. RNA M5U methyltransferase family.

This is an uncharacterized protein from Lactococcus lactis subsp. lactis (strain IL1403) (Streptococcus lactis).